A 94-amino-acid polypeptide reads, in one-letter code: Co-chaperonin GroES (94 aa).

This sequence belongs to the GroES chaperonin family. In terms of assembly, heptamer of 7 subunits arranged in a ring. Interacts with the chaperonin GroEL.

It localises to the cytoplasm. In terms of biological role, together with the chaperonin GroEL, plays an essential role in assisting protein folding. The GroEL-GroES system forms a nano-cage that allows encapsulation of the non-native substrate proteins and provides a physical environment optimized to promote and accelerate protein folding. GroES binds to the apical surface of the GroEL ring, thereby capping the opening of the GroEL channel. In Ehrlichia chaffeensis, this protein is Co-chaperonin GroES.